Reading from the N-terminus, the 642-residue chain is Core protein VP4 (642 aa).

This sequence belongs to the orbivirus VP4 family.

The protein localises to the virion. Its function is as follows. The VP4 protein is one of the five proteins (with VP1, VP3, VP6 and VP7) which form the inner capsid of the virus. The protein is Core protein VP4 (Segment-4) of African horse sickness virus (AHSV).